The primary structure comprises 119 residues: Hydrogenase maturation factor HypA (119 aa).

His-2 lines the Ni(2+) pocket. Positions 73, 76, 90, and 93 each coordinate Zn(2+).

Belongs to the HypA/HybF family.

Its function is as follows. Involved in the maturation of [NiFe] hydrogenases. Required for nickel insertion into the metal center of the hydrogenase. The sequence is that of Hydrogenase maturation factor HypA from Wolinella succinogenes (strain ATCC 29543 / DSM 1740 / CCUG 13145 / JCM 31913 / LMG 7466 / NCTC 11488 / FDC 602W) (Vibrio succinogenes).